We begin with the raw amino-acid sequence, 462 residues long: Adenosylhomocysteinase (462 aa).

T55, D128, and E188 together coordinate substrate. 189–191 is a binding site for NAD(+); the sequence is TTT. Residues K218 and D222 each contribute to the substrate site. Residues N223, 252-257, E275, N310, 331-333, and N376 contribute to the NAD(+) site; these read GYGDVG and IGH.

The protein belongs to the adenosylhomocysteinase family. NAD(+) serves as cofactor.

The protein localises to the cytoplasm. The enzyme catalyses S-adenosyl-L-homocysteine + H2O = L-homocysteine + adenosine. The protein operates within amino-acid biosynthesis; L-homocysteine biosynthesis; L-homocysteine from S-adenosyl-L-homocysteine: step 1/1. In terms of biological role, may play a key role in the regulation of the intracellular concentration of adenosylhomocysteine. This is Adenosylhomocysteinase from Roseobacter denitrificans (strain ATCC 33942 / OCh 114) (Erythrobacter sp. (strain OCh 114)).